The sequence spans 60 residues: Cytotoxin SP15a (60 aa).

4 cysteine pairs are disulfide-bonded: Cys-3–Cys-21, Cys-14–Cys-38, Cys-42–Cys-53, and Cys-54–Cys-59.

This sequence belongs to the three-finger toxin family. Short-chain subfamily. Type IA cytotoxin sub-subfamily. As to quaternary structure, monomer in solution; Homodimer and oligomer in the presence of negatively charged lipids forming a pore with a size ranging between 20 and 30 Angstroms. Expressed by the venom gland.

It is found in the secreted. The protein localises to the target cell membrane. In terms of biological role, shows cytolytic activity on many different cells by forming pore in lipid membranes. In vivo, increases heart rate or kills the animal by cardiac arrest. In addition, it binds to heparin with high affinity, interacts with Kv channel-interacting protein 1 (KCNIP1) in a calcium-independent manner, and binds to integrin alpha-V/beta-3 (ITGAV/ITGB3) with moderate affinity. This is Cytotoxin SP15a from Naja atra (Chinese cobra).